The sequence spans 369 residues: Flagellar P-ring protein (369 aa).

The signal sequence occupies residues 1 to 23 (MRIASFFTVLLTLLTLNITPASA).

This sequence belongs to the FlgI family. In terms of assembly, the basal body constitutes a major portion of the flagellar organelle and consists of four rings (L,P,S, and M) mounted on a central rod.

It is found in the periplasm. Its subcellular location is the bacterial flagellum basal body. In terms of biological role, assembles around the rod to form the L-ring and probably protects the motor/basal body from shearing forces during rotation. This Pectobacterium atrosepticum (strain SCRI 1043 / ATCC BAA-672) (Erwinia carotovora subsp. atroseptica) protein is Flagellar P-ring protein.